The chain runs to 330 residues: 5'-AMP-activated protein kinase subunit gamma-1 (330 aa).

The tract at residues 1–24 is disordered; it reads MEAVPSSDSYPAVENEHLQETPES. CBS domains are found at residues 43–103, 125–187, and 198–260; these read PTSS…KSAL, SFKP…PKPE, and IGTY…NLDV. Residues R70, 85-90, V130, 151-152, and K170 each bind ADP; these read MLTITD and HR. AMP-binding positions include R70, 85–90, V130, H151, 151–152, K170, T200, A205, 226–227, and 242–245; these read MLTITD, HR, SA, and SKFD. Residues R70, 85-90, V130, 151-152, R152, and K170 contribute to the ATP site; these read MLTITD and HR. Positions 138-159 match the AMPK pseudosubstrate motif; sequence LFDAVSSLIRNKIHRLPVIDPE. An ADP-binding site is contributed by 242–245; it reads SKFD. Residue 242–245 participates in ATP binding; the sequence is SKFD. S261 carries the phosphoserine; by ULK1 modification. Position 263 is a phosphothreonine; by ULK1 (T263). An ADP-binding site is contributed by R269. R269 provides a ligand contact to AMP. R269 contacts ATP. Residue S270 is modified to Phosphoserine; by ULK1. Residues 272 to 329 enclose the CBS 4 domain; sequence YFEGVLKCYLHETLETIINRLVEAEVHRLVVVDENDVVKGIVSLSDILQALVLTGGEK. Residues L277 and 298–299 contribute to the ADP site; that span reads HR. Residues L277, H298, 298–299, and 314–317 contribute to the AMP site; these read HR and SLSD. Residues L277 and 298–299 each bind ATP; that span reads HR.

Belongs to the 5'-AMP-activated protein kinase gamma subunit family. As to quaternary structure, AMPK is a heterotrimer of an alpha catalytic subunit (PRKAA1 or PRKAA2), a beta (PRKAB1 or PRKAB2) and a gamma non-catalytic subunits (PRKAG1, PRKAG2 or PRKAG3). Interacts with FNIP1 and FNIP2. Phosphorylated by ULK1 and ULK2; leading to negatively regulate AMPK activity and suggesting the existence of a regulatory feedback loop between ULK1, ULK2 and AMPK. Post-translationally, glycosylated; O-GlcNAcylated by OGT, promoting the AMP-activated protein kinase (AMPK) activity.

Functionally, AMP/ATP-binding subunit of AMP-activated protein kinase (AMPK), an energy sensor protein kinase that plays a key role in regulating cellular energy metabolism. In response to reduction of intracellular ATP levels, AMPK activates energy-producing pathways and inhibits energy-consuming processes: inhibits protein, carbohydrate and lipid biosynthesis, as well as cell growth and proliferation. AMPK acts via direct phosphorylation of metabolic enzymes, and by longer-term effects via phosphorylation of transcription regulators. Also acts as a regulator of cellular polarity by remodeling the actin cytoskeleton; probably by indirectly activating myosin. Gamma non-catalytic subunit mediates binding to AMP, ADP and ATP, leading to activate or inhibit AMPK: AMP-binding results in allosteric activation of alpha catalytic subunit (PRKAA1 or PRKAA2) both by inducing phosphorylation and preventing dephosphorylation of catalytic subunits. ADP also stimulates phosphorylation, without stimulating already phosphorylated catalytic subunit. ATP promotes dephosphorylation of catalytic subunit, rendering the AMPK enzyme inactive. The polypeptide is 5'-AMP-activated protein kinase subunit gamma-1 (PRKAG1) (Bos taurus (Bovine)).